A 219-amino-acid chain; its full sequence is Ribose-5-phosphate isomerase A (219 aa).

Residues 28-31, 81-84, and 94-97 contribute to the substrate site; these read SGST, DGAD, and KGGG. Glutamate 103 (proton acceptor) is an active-site residue. Lysine 121 contacts substrate.

This sequence belongs to the ribose 5-phosphate isomerase family. In terms of assembly, homodimer.

It carries out the reaction aldehydo-D-ribose 5-phosphate = D-ribulose 5-phosphate. It functions in the pathway carbohydrate degradation; pentose phosphate pathway; D-ribose 5-phosphate from D-ribulose 5-phosphate (non-oxidative stage): step 1/1. Catalyzes the reversible conversion of ribose-5-phosphate to ribulose 5-phosphate. This is Ribose-5-phosphate isomerase A from Actinobacillus pleuropneumoniae serotype 5b (strain L20).